The following is a 146-amino-acid chain: MAETQTTTPKKKAERRAPPPARARKNRPAAPAPGPHASLSYLRVAPRKVRIVADEVRGMKVGDALAMLKYTPQSAAKPLAKLLRSAVANAEQGGGRVDVDALFVKTLTVDQGPKMRRFMARAMGRAFRVEKKTSHVYVELGTAARG.

The segment at 1–39 is disordered; it reads MAETQTTTPKKKAERRAPPPARARKNRPAAPAPGPHASL.

This sequence belongs to the universal ribosomal protein uL22 family. In terms of assembly, part of the 50S ribosomal subunit.

Functionally, this protein binds specifically to 23S rRNA; its binding is stimulated by other ribosomal proteins, e.g. L4, L17, and L20. It is important during the early stages of 50S assembly. It makes multiple contacts with different domains of the 23S rRNA in the assembled 50S subunit and ribosome. The globular domain of the protein is located near the polypeptide exit tunnel on the outside of the subunit, while an extended beta-hairpin is found that lines the wall of the exit tunnel in the center of the 70S ribosome. The chain is Large ribosomal subunit protein uL22 from Anaeromyxobacter dehalogenans (strain 2CP-1 / ATCC BAA-258).